The following is a 327-amino-acid chain: Phenylalanine--tRNA ligase alpha subunit (327 aa).

Glu-252 contacts Mg(2+).

This sequence belongs to the class-II aminoacyl-tRNA synthetase family. Phe-tRNA synthetase alpha subunit type 1 subfamily. In terms of assembly, tetramer of two alpha and two beta subunits. Mg(2+) serves as cofactor.

The protein resides in the cytoplasm. It catalyses the reaction tRNA(Phe) + L-phenylalanine + ATP = L-phenylalanyl-tRNA(Phe) + AMP + diphosphate + H(+). The protein is Phenylalanine--tRNA ligase alpha subunit of Shewanella sediminis (strain HAW-EB3).